We begin with the raw amino-acid sequence, 238 residues long: Large ribosomal subunit protein uL1 (238 aa).

This sequence belongs to the universal ribosomal protein uL1 family. Part of the 50S ribosomal subunit.

Its function is as follows. Binds directly to 23S rRNA. The L1 stalk is quite mobile in the ribosome, and is involved in E site tRNA release. In terms of biological role, protein L1 is also a translational repressor protein, it controls the translation of the L11 operon by binding to its mRNA. The chain is Large ribosomal subunit protein uL1 from Saccharopolyspora erythraea (strain ATCC 11635 / DSM 40517 / JCM 4748 / NBRC 13426 / NCIMB 8594 / NRRL 2338).